The sequence spans 1127 residues: Elongation factor-like GTPase 1 (1127 aa).

Residues 17-272 (ANIRNICVLA…LLKTLWGDYY (256 aa)) form the tr-type G domain. Residues 26–33 (AHVDHGKT), 92–96 (DSPGH), and 146–149 (NKID) each bind GTP. The interval 429–496 (KPRPLTQEEM…VASVSRQPVS (68 aa)) is disordered. Basic and acidic residues-rich tracts occupy residues 438 to 452 (MAQR…HAEK) and 474 to 484 (SPHEDEPRGDE). The residue at position 528 (K528) is an N6-acetyllysine.

It belongs to the TRAFAC class translation factor GTPase superfamily. Classic translation factor GTPase family. In terms of assembly, associates with the 60S ribosomal subunit. Found in a complex consisting of the 60S ribosomal subunit, SBDS and EFL1.

It catalyses the reaction GTP + H2O = GDP + phosphate + H(+). GTPase activity is stimulated in the presence of 60S ribosome subunits. In terms of biological role, GTPase involved in the biogenesis of the 60S ribosomal subunit and translational activation of ribosomes. Together with SBDS, triggers the GTP-dependent release of EIF6 from 60S pre-ribosomes in the cytoplasm, thereby activating ribosomes for translation competence by allowing 80S ribosome assembly and facilitating EIF6 recycling to the nucleus, where it is required for 60S rRNA processing and nuclear export. The chain is Elongation factor-like GTPase 1 (Efl1) from Mus musculus (Mouse).